A 68-amino-acid chain; its full sequence is Putative membrane protein insertion efficiency factor (68 aa).

It belongs to the UPF0161 family.

The protein resides in the cell inner membrane. Could be involved in insertion of integral membrane proteins into the membrane. The sequence is that of Putative membrane protein insertion efficiency factor from Hydrogenobaculum sp. (strain Y04AAS1).